Reading from the N-terminus, the 264-residue chain is SPRY domain-containing SOCS box protein 2 (264 aa).

Over residues Met1–Leu19 the composition is skewed to polar residues. Residues Met1–Ser34 are disordered. The region spanning Pro26–Arg221 is the B30.2/SPRY domain. Positions Val222–Lys264 constitute an SOCS box domain.

The protein belongs to the SPSB family. As to quaternary structure, component of the probable ECS(SPSB2) E3 ubiquitin-protein ligase complex which contains CUL5, RNF7/RBX2, Elongin BC complex and SPSB2. Interacts with CUL5, RNF7, ELOB and ELOC. Interacts with MET. Interacts (via B30.2/SPRY domain) with PAWR; this interaction occurs in association with the Elongin BC complex. Interacts with NOS2.

Its subcellular location is the cytoplasm. It localises to the cytosol. It participates in protein modification; protein ubiquitination. In terms of biological role, substrate recognition component of a SCF-like ECS (Elongin BC-CUL2/5-SOCS-box protein) E3 ubiquitin-protein ligase complex which mediates the ubiquitination and subsequent proteasomal degradation of target proteins. Negatively regulates nitric oxide (NO) production and limits cellular toxicity in activated macrophages by mediating the ubiquitination and proteasomal degradation of NOS2. Acts as a bridge which links NOS2 with the ECS E3 ubiquitin ligase complex components ELOC and CUL5. The chain is SPRY domain-containing SOCS box protein 2 (Spsb2) from Mus musculus (Mouse).